Here is a 676-residue protein sequence, read N- to C-terminus: SPARC-like protein 1 (676 aa).

An N-terminal signal peptide occupies residues Met-1–Thr-16. The segment covering Glu-35–Met-44 has biased composition (basic and acidic residues). Disordered stretches follow at residues Glu-35–Arg-151, Asn-173–Arg-369, and Ser-385–Thr-437. Polar residues predominate over residues Lys-95–Ser-108. Asn-182 is a glycosylation site (N-linked (GlcNAc...) asparagine). Over residues Ser-184 to Asp-202 the composition is skewed to acidic residues. Composition is skewed to basic and acidic residues over residues Glu-249 to Lys-266 and Asn-273 to Phe-291. Acidic residues predominate over residues Asn-312 to Leu-328. An N-linked (GlcNAc...) asparagine glycan is attached at Asn-318. The segment covering Ser-385 to Pro-394 has biased composition (basic and acidic residues). N-linked (GlcNAc...) asparagine glycosylation is present at Asn-396. A compositionally biased stretch (low complexity) spans Ser-397–Ser-408. Asn-413 carries N-linked (GlcNAc...) asparagine glycosylation. Residues Thr-415–Ala-433 show a composition bias toward basic and acidic residues. A glycan (N-linked (GlcNAc...) asparagine) is linked at Asn-435. Positions Leu-444–Cys-466 constitute a Follistatin-like domain. 7 disulfides stabilise this stretch: Cys-445-Cys-456, Cys-450-Cys-466, Cys-468-Cys-502, Cys-474-Cys-495, Cys-484-Cys-521, Cys-527-Cys-638, and Cys-646-Cys-662. The 62-residue stretch at Gly-462–His-523 folds into the Kazal-like domain. Asn-488 carries N-linked (GlcNAc...) asparagine glycosylation. In terms of domain architecture, EF-hand spans Pro-634–Asp-669. Ca(2+)-binding residues include Asp-647, Asp-649, Asp-651, and Glu-658.

This sequence belongs to the SPARC family. Glial (Mueller) cells of the neuroretina.

The protein resides in the secreted. The protein localises to the extracellular space. Its subcellular location is the extracellular matrix. In terms of biological role, could play a role in the late stage of neuroretina morphogenesis. The chain is SPARC-like protein 1 (SPARCL1) from Coturnix japonica (Japanese quail).